The following is an 81-amino-acid chain: Lantipeptide prochlorosin 1.1 (81 aa).

Residues 1–65 (MSEEQLKAFI…DDDLEGVAGG (65 aa)) constitute a propeptide that is removed on maturation. The beta-methyllanthionine (Cys-Thr) cross-link spans 68–72 (CVQGT). Residues 77 to 81 (TINVC) constitute a cross-link (beta-methyllanthionine (Thr-Cys)).

Cross-links are proved in vitro, when coepressed in E.coli with the ProcM lanthionine synthetase. Post-translationally, the beta-methyllanthionine residues have a DL configuration (with 2S,3S,6R stereochemistry). In terms of processing, maturation of prochlorosin involves the enzymatic conversion of Thr, and Ser into dehydrated AA and the formation of thioether bonds with cysteines. This is followed by membrane translocation and cleavage of the modified precursor.

It is found in the secreted. In terms of biological role, lanthionine-containing peptide (lantipeptide) with unknown function. Does not show antibiotic activity against Lactococcus lactis 117 and Bacillus subtilis 6633 bacteria. Organisms that produce this peptide live in oligotrophic environments at very dilute concentrations, suggesting this peptide is not secreted to influence other bacteria. In Prochlorococcus marinus (strain MIT 9313), this protein is Lantipeptide prochlorosin 1.1.